Reading from the N-terminus, the 505-residue chain is Probable cytochrome P450 28a5 (505 aa).

Residue Cys450 coordinates heme.

The protein belongs to the cytochrome P450 family. Heme is required as a cofactor.

The protein resides in the endoplasmic reticulum membrane. It localises to the microsome membrane. Functionally, may be involved in the metabolism of insect hormones and in the breakdown of synthetic insecticides. This Drosophila melanogaster (Fruit fly) protein is Probable cytochrome P450 28a5 (Cyp28a5).